The chain runs to 299 residues: Phosphatidylcholine-sterol acyltransferase (299 aa).

2 N-linked (GlcNAc...) asparagine glycosylation sites follow: N28 and N184. Cysteines 225 and 268 form a disulfide. The active-site Charge relay system is D257. N285 carries N-linked (GlcNAc...) asparagine glycosylation. The active-site Charge relay system is H289. N296 carries an N-linked (GlcNAc...) asparagine glycan.

It belongs to the AB hydrolase superfamily. Lipase family.

It is found in the secreted. It catalyses the reaction a sterol + a 1,2-diacyl-sn-glycero-3-phosphocholine = a sterol ester + a 1-acyl-sn-glycero-3-phosphocholine. With respect to regulation, APOA1 is the most potent activator in plasma. Also activated by APOE, APOC1 and APOA4. In terms of biological role, central enzyme in the extracellular metabolism of plasma lipoproteins. Synthesized mainly in the liver and secreted into plasma where it converts cholesterol and phosphatidylcholines (lecithins) to cholesteryl esters and lysophosphatidylcholines on the surface of high and low density lipoproteins (HDLs and LDLs). The cholesterol ester is then transported back to the liver. Has a preference for plasma 16:0-18:2 or 18:O-18:2 phosphatidylcholines. Also produced in the brain by primary astrocytes, and esterifies free cholesterol on nascent APOE-containing lipoproteins secreted from glia and influences cerebral spinal fluid (CSF) APOE- and APOA1 levels. Together with APOE and the cholesterol transporter ABCA1, plays a key role in the maturation of glial-derived, nascent lipoproteins. Required for remodeling high-density lipoprotein particles into their spherical forms. This chain is Phosphatidylcholine-sterol acyltransferase (LCAT), found in Micromys minutus (European harvest mouse).